The following is a 463-amino-acid chain: Xanthine permease XanP (463 aa).

The next 12 helical transmembrane spans lie at 43–63 (LLAMFVAVITPALLICQALGL), 71–91 (IISMSLFASGVASIIQIKAWG), 93–113 (VGSGLLSIQGTSFNFVAPLIM), 126–146 (PTMMAALFGTLMLASCTEMVI), 156–176 (IITPLVSGVVVMIIGLSLIQV), 192–212 (TFGAPKNLLLAGVVLALIILL), 222–242 (VASLVIAMAAGYALAWFMGML), 260–280 (LYYGLGIEWSLLLPLMLVFMI), 352–372 (GFVVALMLIVLGLFPAVSGFV), 379–399 (VLGGATLVMFGTIAASGVRIV), 409–429 (ILIIALSLAVGLGVSQQPLIL), and 439–459 (LLSSGIAAGGITAIVLNLIFP).

This sequence belongs to the nucleobase:cation symporter-2 (NCS2) (TC 2.A.40) family.

Its subcellular location is the cell inner membrane. The enzyme catalyses xanthine(in) + H(+)(in) = xanthine(out) + H(+)(out). Functionally, specific, proton motive force-dependent high-affinity transporter for xanthine. This Escherichia coli O6:H1 (strain CFT073 / ATCC 700928 / UPEC) protein is Xanthine permease XanP (xanP).